A 481-amino-acid chain; its full sequence is Probable cytosol aminopeptidase (481 aa).

Mn(2+) is bound by residues Lys247 and Asp252. The active site involves Lys259. Residues Asp270, Asp329, and Glu331 each coordinate Mn(2+). Arg333 is an active-site residue.

It belongs to the peptidase M17 family. Mn(2+) serves as cofactor.

It localises to the cytoplasm. The enzyme catalyses Release of an N-terminal amino acid, Xaa-|-Yaa-, in which Xaa is preferably Leu, but may be other amino acids including Pro although not Arg or Lys, and Yaa may be Pro. Amino acid amides and methyl esters are also readily hydrolyzed, but rates on arylamides are exceedingly low.. It carries out the reaction Release of an N-terminal amino acid, preferentially leucine, but not glutamic or aspartic acids.. Presumably involved in the processing and regular turnover of intracellular proteins. Catalyzes the removal of unsubstituted N-terminal amino acids from various peptides. The polypeptide is Probable cytosol aminopeptidase (Clostridium tetani (strain Massachusetts / E88)).